The sequence spans 128 residues: MTKTPEMTKTAIAHGKYIRGSASKVRRVLDQIRGKSYRDALIMLEFMPYRSTDPITKVLRSAVANAEHNLGMDPSSLVISSASADNGPVMKRFRPRAQGRAFSIKKQTCHISISVESAPNQTNTEAQN.

Belongs to the universal ribosomal protein uL22 family. In terms of assembly, part of the 50S ribosomal subunit.

This protein binds specifically to 23S rRNA; its binding is stimulated by other ribosomal proteins, e.g. L4, L17, and L20. It is important during the early stages of 50S assembly. It makes multiple contacts with different domains of the 23S rRNA in the assembled 50S subunit and ribosome. Functionally, the globular domain of the protein is located near the polypeptide exit tunnel on the outside of the subunit, while an extended beta-hairpin is found that lines the wall of the exit tunnel in the center of the 70S ribosome. This Prochlorococcus marinus subsp. pastoris (strain CCMP1986 / NIES-2087 / MED4) protein is Large ribosomal subunit protein uL22.